A 580-amino-acid polypeptide reads, in one-letter code: Cis-3-hydroxy-L-proline dehydratase (580 aa).

Ser66 serves as the catalytic Proton acceptor.

Belongs to the AcnX family. Monomer. The cofactor is Fe(3+).

The enzyme catalyses cis-3-hydroxy-L-proline = 1-pyrroline-2-carboxylate + H2O. With respect to regulation, inhibited by Zn(2+), Cd(2+) and Hg(2+), but not by Co(2+), Ni(2+), Mn(2+), Sr(2+), Mg(2+), or Fe(3+). Inhibited by pyrrole-2-carboxylate and its derivative 2-thiophenecarboxylate, but not by trans-aconitate, fluorocitrate and oxalomalate, which are typical inhibitors of the aconitase enzymes. Catalyzes the dehydration of cis-3-hydroxy-L-proline (c3LHyp) to Delta(1)-pyrroline-2-carboxylate (Pyr2C). Also has activity with (2S,3S,4R)-3,4-dihydroxyproline as substrate, albeit at about 300-fold lower rate. No activity with L-proline, trans-4-hydroxy-L-proline (t4LHyp), cis-4-hydroxy-L-proline (c4LHyp), trans-3-hydroxy-L-proline (t3LHyp), D-proline, cis-4-hydroxy-D-proline (c4DHyp), trans-4-hydroxy-D-proline (t4DHyp) or L-serine as substrates. No hydro-lyase activity with citrate or cis-acotinate. Does not catalyze 2-epimerization of c3LHyp to trans-3-hydroxy-D-proline (t3DHyp). Involved in a degradation pathway that converts c3LHyp to L-proline, which would allow P.aeruginosa to grow on c3LHyp as a sole carbon source. This chain is Cis-3-hydroxy-L-proline dehydratase, found in Pseudomonas aeruginosa (strain ATCC 15692 / DSM 22644 / CIP 104116 / JCM 14847 / LMG 12228 / 1C / PRS 101 / PAO1).